Here is a 502-residue protein sequence, read N- to C-terminus: UPF0371 protein CTC_00401 (502 aa).

It belongs to the UPF0371 family.

In Clostridium tetani (strain Massachusetts / E88), this protein is UPF0371 protein CTC_00401.